A 509-amino-acid chain; its full sequence is Taxoid 14-beta-hydroxylase (509 aa).

The next 3 membrane-spanning stretches (helical) occupy residues 20 to 40 (AILFIVLSAVAGIVLPLLLFL), 186 to 206 (SVVALVGDLVFDISACLFFNI), and 218 to 238 (LLEIIAVGVLAVPVDLPGFAY). Cys443 contacts heme.

It belongs to the cytochrome P450 family.

Its subcellular location is the microsome membrane. It catalyses the reaction 10beta-hydroxytaxa-4(20),11-dien-5alpha-yl acetate + NADPH + O2 + H(+) = 10beta,14beta-dihydroxytaxa-4(20),11-dien-5alpha-yl acetate + NADP(+) + H2O. It functions in the pathway alkaloid biosynthesis; taxol biosynthesis. Its function is as follows. Catalyzes the conversion of 5-alpha-acetoxy-10beta-ol to 5-alpha-acetoxy-10beta,14beta-dihydroxy taxadiene. Also acts on taxa-4(20),11-dien-5-alpha-yl acetate. The chain is Taxoid 14-beta-hydroxylase from Taxus cuspidata (Japanese yew).